Reading from the N-terminus, the 156-residue chain is Small ribosomal subunit protein uS7c (156 aa).

The protein belongs to the universal ribosomal protein uS7 family. As to quaternary structure, part of the 30S ribosomal subunit.

It localises to the plastid. It is found in the cyanelle. In terms of biological role, one of the primary rRNA binding proteins, it binds directly to 16S rRNA where it nucleates assembly of the head domain of the 30S subunit. The polypeptide is Small ribosomal subunit protein uS7c (rps7) (Cyanophora paradoxa).